A 413-amino-acid chain; its full sequence is SET and MYND domain-containing protein DDB_G0273591 (413 aa).

An SET domain is found at 6–311; that stretch reads DGLKLSNSEL…KGDQINISYL (306 aa). An MYND-type zinc finger spans residues 51–95; it reads CYNCIKLIKSPSPQQVPRCFGCNEVWYCSEKCKQDNQAKHQHYEC. Residues 205-232 form a disordered region; sequence DNNNNNNNNNNNNNNNNNNNNNNNNNNN. Positions 216–243 form a coiled coil; the sequence is NNNNNNNNNNNNNNNNNNNIEELIKLIR.

Belongs to the class V-like SAM-binding methyltransferase superfamily.

Probable methyltransferase. The chain is SET and MYND domain-containing protein DDB_G0273591 from Dictyostelium discoideum (Social amoeba).